We begin with the raw amino-acid sequence, 110 residues long: Small ribosomal subunit protein bS18c (110 aa).

The protein belongs to the bacterial ribosomal protein bS18 family. Part of the 30S ribosomal subunit.

It is found in the plastid. The protein resides in the chloroplast. This is Small ribosomal subunit protein bS18c (rps18) from Pisum sativum (Garden pea).